Here is a 342-residue protein sequence, read N- to C-terminus: Heparan sulfate glucosamine 3-O-sulfotransferase 6 (342 aa).

The segment at 1 to 21 (MAGSGGLGGGAGGGQGAGAGQ) is disordered. At 1–31 (MAGSGGLGGGAGGGQGAGAGQGAALRASRAP) the chain is on the cytoplasmic side. The chain crosses the membrane as a helical; Signal-anchor for type II membrane protein span at residues 32–49 (MLLVALVLGAYCLCALPG). Topologically, residues 50 to 342 (RCPPAARAPA…QMTGQDFGWG (293 aa)) are lumenal. The disordered stretch occupies residues 55-85 (ARAPAPAPAPSEPSSSVHRPGAPGLPLASGP). A compositionally biased stretch (low complexity) spans 66–85 (EPSSSVHRPGAPGLPLASGP). 100-104 (KGGTR) contacts 3'-phosphoadenylyl sulfate. Substrate is bound by residues 122–128 (EPHFFDR) and 153–156 (KTPS). Residues R181 and S189 each coordinate 3'-phosphoadenylyl sulfate. Residue 220-221 (WS) coordinates substrate. N281 is a glycosylation site (N-linked (GlcNAc...) asparagine). C288 and C300 form a disulfide bridge. 305–309 (KGRPH) provides a ligand contact to 3'-phosphoadenylyl sulfate.

This sequence belongs to the sulfotransferase 1 family.

The protein localises to the golgi apparatus membrane. The enzyme catalyses alpha-D-glucosaminyl-[heparan sulfate](n) + 3'-phosphoadenylyl sulfate = 3-sulfo-alpha-D-glucosaminyl-[heparan sulfate](n) + adenosine 3',5'-bisphosphate + H(+). Sulfotransferase that utilizes 3'-phospho-5'-adenylyl sulfate (PAPS) to catalyze the transfer of a sulfo group to heparan sulfate. The substrate-specific O-sulfation generates an enzyme-modified heparan sulfate which acts as a binding receptor to Herpes Simplex Virus-1 (HSV-1) and permits its entry. Unlike 3-OST-1, does not convert non-anticoagulant heparan sulfate to anticoagulant heparan sulfate. This Homo sapiens (Human) protein is Heparan sulfate glucosamine 3-O-sulfotransferase 6 (HS3ST6).